The primary structure comprises 161 residues: Chaperone protein dnaJ 11, chloroplastic (161 aa).

Residues Met1–Pro18 are compositionally biased toward low complexity. The disordered stretch occupies residues Met1–Arg31. The transit peptide at Met1–Leu36 directs the protein to the chloroplast. Positions Ser65–Met133 constitute a J domain.

This sequence belongs to the DnaJ family. C/III subfamily. Expressed in roots, stems, leaves, flowers and developing siliques.

It localises to the plastid. It is found in the chloroplast stroma. Functionally, plays a continuous role in plant development probably in the structural organization of compartments. The protein is Chaperone protein dnaJ 11, chloroplastic (ATJ11) of Arabidopsis thaliana (Mouse-ear cress).